The following is a 424-amino-acid chain: MFLLPRFVLVSCIIGSLGFDNPPTNVVSHLNGDWFLFGDSRSDCNHVVTTNPRNYSYMDLNPALCDSGKISSKAGNSIFRSFHFTDFYNYTGEGQQIIFYEGVNFTPYHAFKCTTSGSNDIWMQNKGLFYTQLYKNMAVYRSLTFVNVPYVYNGSAQSTALCKSGSLVLNNPAYIAREANFGDYYYKVEADFYLSGCDEYIVPLCIFNGKFLSNTKYYDDSQYYFNKDTGVIYGLNSTETITTGFDFNCHYLVLPSGNYLAISNELLLTVPTKAICLNKRKDFTPVQVVDSRWNNAMQSDNMTAVACQPPYCYFRNSTTNYVGVYDINHGDAGFTSILSGLLYDSPCFSQQGVFRYDNVSSVWPLYPYGRCPTAADINTPDVPICVYDPLPIILLGILLGVAVIIIVVLLLYFMVDNGTRLHDA.

A signal peptide spans methionine 1–serine 16. An esterase domain 1 region spans residues phenylalanine 7 to glycine 127. At leucine 17 to isoleucine 392 the chain is on the virion surface side. Serine 40 acts as the Nucleophile in catalysis. An intrachain disulfide couples cysteine 44 to cysteine 65. Residues asparagine 54, asparagine 89, asparagine 153, asparagine 236, and asparagine 301 are each glycosylated (N-linked (GlcNAc...) asparagine; by host). 3 disulfide bridges follow: cysteine 113–cysteine 162, cysteine 197–cysteine 276, and cysteine 205–cysteine 249. Residues leucine 128 to leucine 266 are receptor binding. Residues leucine 267–threonine 379 form an esterase domain 2 region. Cysteine 307 and cysteine 312 form a disulfide bridge. N-linked (GlcNAc...) asparagine; by host glycosylation occurs at asparagine 316. Catalysis depends on charge relay system residues aspartate 326 and histidine 329. Residues cysteine 347 and cysteine 371 are joined by a disulfide bond. Asparagine 358 carries an N-linked (GlcNAc...) asparagine; by host glycan. Residues isoleucine 393–phenylalanine 413 form a helical membrane-spanning segment. The Intravirion segment spans residues methionine 414 to alanine 424. The N-linked (GlcNAc...) asparagine; by host glycan is linked to asparagine 417.

The protein belongs to the influenza type C/coronaviruses hemagglutinin-esterase family. In terms of assembly, homodimer; disulfide-linked. Forms a complex with the M protein in the pre-Golgi. Associates then with S-M complex to form a ternary complex S-M-HE. Post-translationally, N-glycosylated in the host RER.

Its subcellular location is the virion membrane. The protein localises to the host cell membrane. It catalyses the reaction N-acetyl-9-O-acetylneuraminate + H2O = N-acetylneuraminate + acetate + H(+). The catalysed reaction is N-acetyl-4-O-acetylneuraminate + H2O = N-acetylneuraminate + acetate + H(+). Structural protein that makes short spikes at the surface of the virus. Contains receptor binding and receptor-destroying activities. Mediates de-O-acetylation of N-acetyl-4-O-acetylneuraminic acid, which is probably the receptor determinant recognized by the virus on the surface of erythrocytes and susceptible cells. This receptor-destroying activity is important for virus release as it probably helps preventing self-aggregation and ensures the efficient spread of the progeny virus from cell to cell. May serve as a secondary viral attachment protein for initiating infection, the spike protein being the major one. May become a target for both the humoral and the cellular branches of the immune system. The chain is Hemagglutinin-esterase from Bovine coronavirus (strain LSU-94LSS-051) (BCoV-LSU).